The sequence spans 185 residues: uncharacterized protein (185 aa).

This is an uncharacterized protein from Bacillus subtilis (strain 168).